A 1105-amino-acid chain; its full sequence is DNA polymerase delta catalytic subunit (1105 aa).

The disordered stretch occupies residues 1–46 (MSSGGRGGKRRGAPPPGPSGAAAKRAHPGGTPQPPPPAATAAAPVA). Zn(2+)-binding residues include C1015, C1018, C1030, and C1033. The segment at 1015–1033 (CLGCKAVISGSNQTLCFHC) adopts a CysA-type zinc-finger fold. [4Fe-4S] cluster contacts are provided by C1062, C1065, C1075, and C1080. Positions 1062–1080 (CQECQGSLHQDVLCTSRDC) match the CysB motif motif.

This sequence belongs to the DNA polymerase type-B family. Heterodimer with subunits of 125 kDa and 50 kDa. The 125 kDa subunit contains the polymerase active site and most likely the active site for the 3'-5' exonuclease activity. [4Fe-4S] cluster is required as a cofactor.

Its subcellular location is the nucleus. It carries out the reaction DNA(n) + a 2'-deoxyribonucleoside 5'-triphosphate = DNA(n+1) + diphosphate. In terms of biological role, this polymerase possesses two enzymatic activities: DNA synthesis (polymerase) and an exonucleolytic activity that degrades single-stranded DNA in the 3'- to 5'-direction. In Oryza sativa subsp. japonica (Rice), this protein is DNA polymerase delta catalytic subunit (POLD1).